Reading from the N-terminus, the 253-residue chain is Chloride intracellular channel protein 4 (253 aa).

Alanine 2 bears the N-acetylalanine mark. Residues 2 to 101 (ALSMPLNGLK…EEFLEEVLCP (100 aa)) form a required for insertion into the membrane region. Serine 4 is subject to Phosphoserine. The residue at position 24 (lysine 24) is an N6-acetyllysine. The G-site signature appears at 35–38 (CPFS). Residues 37–57 (FSQRLFMILWLKGVVFSVTTV) form a helical membrane-spanning segment. A GST C-terminal domain is found at 81 to 244 (NSEVKTDVNK…PSDKEVEIAY (164 aa)). Position 130 is an N6-acetyllysine (lysine 130). Residues serine 132, serine 167, and serine 236 each carry the phosphoserine modification. Tyrosine 244 carries the post-translational modification Phosphotyrosine.

It belongs to the chloride channel CLIC family. Monomer. Interacts with HRH30. Interacts with AKAP9. Detected in blood vessels in the retina (at protein level). Expressed to the greatest extent in vivo in heart, lung, liver, kidney, and skin.

The protein resides in the cytoplasm. It localises to the cytoskeleton. The protein localises to the microtubule organizing center. It is found in the centrosome. Its subcellular location is the cytoplasmic vesicle membrane. The protein resides in the nucleus. It localises to the cell membrane. The protein localises to the mitochondrion. It is found in the cell junction. It carries out the reaction chloride(in) = chloride(out). It catalyses the reaction thiocyanate(in) = thiocyanate(out). The enzyme catalyses nitrate(in) = nitrate(out). The catalysed reaction is iodide(out) = iodide(in). It carries out the reaction bromide(in) = bromide(out). It catalyses the reaction fluoride(in) = fluoride(out). The enzyme catalyses choline(out) = choline(in). Functionally, in the soluble state, catalyzes glutaredoxin-like thiol disulfide exchange reactions with reduced glutathione as electron donor. Can insert into membranes and form voltage-dependent multi-ion conductive channels. Membrane insertion seems to be redox-regulated and may occur only under oxidizing conditions. Has alternate cellular functions like a potential role in angiogenesis or in maintaining apical-basolateral membrane polarity during mitosis and cytokinesis. Could also promote endothelial cell proliferation and regulate endothelial morphogenesis (tubulogenesis). Promotes cell-surface expression of HRH3. This Mus musculus (Mouse) protein is Chloride intracellular channel protein 4 (Clic4).